The following is a 753-amino-acid chain: 5-methyltetrahydropteroyltriglutamate--homocysteine methyltransferase (753 aa).

5-methyltetrahydropteroyltri-L-glutamate-binding positions include 17–20 (RELK) and K117. L-homocysteine contacts are provided by residues 431-433 (IGS) and E484. L-methionine contacts are provided by residues 431 to 433 (IGS) and E484. 5-methyltetrahydropteroyltri-L-glutamate-binding positions include 515-516 (RC) and W561. L-homocysteine is bound at residue D599. L-methionine is bound at residue D599. 5-methyltetrahydropteroyltri-L-glutamate is bound at residue E605. 3 residues coordinate Zn(2+): H641, C643, and E665. Catalysis depends on H694, which acts as the Proton donor. C726 contacts Zn(2+).

Belongs to the vitamin-B12 independent methionine synthase family. The cofactor is Zn(2+).

It catalyses the reaction 5-methyltetrahydropteroyltri-L-glutamate + L-homocysteine = tetrahydropteroyltri-L-glutamate + L-methionine. The protein operates within amino-acid biosynthesis; L-methionine biosynthesis via de novo pathway; L-methionine from L-homocysteine (MetE route): step 1/1. In terms of biological role, catalyzes the transfer of a methyl group from 5-methyltetrahydrofolate to homocysteine resulting in methionine formation. The sequence is that of 5-methyltetrahydropteroyltriglutamate--homocysteine methyltransferase from Escherichia coli O6:H1 (strain CFT073 / ATCC 700928 / UPEC).